Reading from the N-terminus, the 147-residue chain is UPF0306 protein YhbP (147 aa).

Belongs to the UPF0306 family.

This is UPF0306 protein YhbP from Salmonella arizonae (strain ATCC BAA-731 / CDC346-86 / RSK2980).